The primary structure comprises 205 residues: Small ribosomal subunit protein uS4 (205 aa).

Positions 20–47 are disordered; the sequence is WGRSKSPLNRGKENPPGQHGQRRKKPSD. The region spanning 94-154 is the S4 RNA-binding domain; it reads CRLDAVVYRL…TKSKDMALIL (61 aa).

The protein belongs to the universal ribosomal protein uS4 family. Part of the 30S ribosomal subunit. Contacts protein S5. The interaction surface between S4 and S5 is involved in control of translational fidelity.

Its function is as follows. One of the primary rRNA binding proteins, it binds directly to 16S rRNA where it nucleates assembly of the body of the 30S subunit. In terms of biological role, with S5 and S12 plays an important role in translational accuracy. In Paramagnetospirillum magneticum (strain ATCC 700264 / AMB-1) (Magnetospirillum magneticum), this protein is Small ribosomal subunit protein uS4.